A 142-amino-acid polypeptide reads, in one-letter code: Ctenidin-3 (142 aa).

A signal peptide spans 1–19 (MKHLIPLIVMASVVLAVYA). Position 139 is a tyrosine amide (Tyr-139).

As to expression, expressed in hemocytes (at protein level).

The protein localises to the secreted. Its function is as follows. Antimicrobial protein with bacteriostatic activity against the Gram-negative bacterium E.coli, and very weak activity against the Gram-positive bacterium S.aureus. Lacks activity against the yeast C.albicans. In Cupiennius salei (American wandering spider), this protein is Ctenidin-3.